The following is a 396-amino-acid chain: E3 ubiquitin-protein transferase MAEA (396 aa).

The extracellular and involved in cell to cell contact stretch occupies residues 1-124 (MAVQESAAQL…AAASVWKRKR (124 aa)). Thr28 carries the phosphothreonine modification. The region spanning 121 to 153 (KRKRMDRMMVEHLLRCGYYNTAVKLARQSGIED) is the LisH domain. The CTLH domain maps to 159-216 (MFLTAKEVEESLERRETATCLAWCHDNKSRLRKMKSCLEFSLRIQEFIELIRQNKRLD). An RING-Gid-type zinc finger spans residues 314–381 (CPVCSRSLNK…QDDKVVCPRT (68 aa)).

In terms of assembly, identified in the CTLH complex that contains GID4, RANBP9 and/or RANBP10, MKLN1, MAEA, RMND5A (or alternatively its paralog RMND5B), GID8, ARMC8, WDR26 and YPEL5. Within this complex, MAEA, RMND5A (or alternatively its paralog RMND5B), GID8, WDR26, and RANBP9 and/or RANBP10 form the catalytic core, while GID4, MKLN1, ARMC8 and YPEL5 have ancillary roles. Interacts with F-actin. Post-translationally, autoubiquitinated as component of the CTLH E3 ubiquitin-protein ligase complex (in vitro).

It localises to the cytoplasm. The protein resides in the nucleus. Its subcellular location is the nucleoplasm. The protein localises to the nucleus matrix. It is found in the cell membrane. It localises to the cytoskeleton. The enzyme catalyses S-ubiquitinyl-[E2 ubiquitin-conjugating enzyme]-L-cysteine + [acceptor protein]-L-lysine = [E2 ubiquitin-conjugating enzyme]-L-cysteine + N(6)-ubiquitinyl-[acceptor protein]-L-lysine.. Core component of the CTLH E3 ubiquitin-protein ligase complex that selectively accepts ubiquitin from UBE2H and mediates ubiquitination and subsequent proteasomal degradation of the transcription factor HBP1. MAEA and RMND5A are both required for catalytic activity of the CTLH E3 ubiquitin-protein ligase complex. MAEA is required for normal cell proliferation. The CTLH E3 ubiquitin-protein ligase complex is not required for the degradation of enzymes involved in gluconeogenesis, such as FBP1. Plays a role in erythroblast enucleation during erythrocyte maturation and in the development of mature macrophages. Mediates the attachment of erythroid cell to mature macrophages; this MAEA-mediated contact inhibits erythroid cell apoptosis. Participates in erythroblastic island formation, which is the functional unit of definitive erythropoiesis. Associates with F-actin to regulate actin distribution in erythroblasts and macrophages. May contribute to nuclear architecture and cells division events. The chain is E3 ubiquitin-protein transferase MAEA (MAEA) from Pongo abelii (Sumatran orangutan).